The primary structure comprises 808 residues: TBC1 domain family member 10B (808 aa).

3 disordered regions span residues 1 to 38, 60 to 225, and 237 to 264; these read METGTAPLVAPPRRHGAPAAPSPPPRGSRAGPVVVVAP, PAWV…GTCE, and PEPAENSQDLGSTSSLGPGISGPRGQAP. At serine 22 the chain carries Phosphoserine. The span at 27–38 shows a compositional bias: low complexity; it reads GSRAGPVVVVAP. Residues 100 to 112 are compositionally biased toward pro residues; the sequence is APKPQLPSGPESP. The residue at position 141 (serine 141) is a Phosphoserine. A compositionally biased stretch (low complexity) spans 149–178; the sequence is PTGTPTRTPSRTAPGALTAKPPLAPKPGTT. Threonine 152 carries the post-translational modification Phosphothreonine. A compositionally biased stretch (polar residues) spans 179 to 189; the sequence is VASGVTARSAS. Arginine 186 carries the omega-N-methylarginine modification. Low complexity predominate over residues 198–209; the sequence is AAAATSASAGQA. The span at 242 to 252 shows a compositional bias: polar residues; that stretch reads NSQDLGSTSSL. The region spanning 360-548 is the Rab-GAP TBC domain; the sequence is GIPSSLRAKA…RVWDMFFCEG (189 aa). The disordered stretch occupies residues 629-808; sequence QYRPSRRLHG…SAEARQDAYF (180 aa). Low complexity predominate over residues 655-676; that stretch reads PSSSLLSLPGLKSRGSRAAGGA. Phosphoserine is present on residues serine 658, serine 661, serine 678, and serine 687. The span at 684-696 shows a compositional bias: low complexity; it reads RRASAGPAPGPVV. Positions 707 to 718 are enriched in polar residues; it reads SPTGNSTPLGSS. The stretch at 716–782 forms a coiled coil; sequence GSSKETRKQE…KAQGRKLSLR (67 aa). Basic and acidic residues-rich tracts occupy residues 719–774 and 793–808; these read KETR…EKKA and DGGDRPSAEARQDAYF.

The protein localises to the cytoplasm. It is found in the cell membrane. Its function is as follows. Acts as a GTPase-activating protein for RAB3A, RAB22A, RAB27A, and RAB35. Does not act on RAB2A and RAB6A. This chain is TBC1 domain family member 10B (TBC1D10B), found in Homo sapiens (Human).